Consider the following 993-residue polypeptide: uncharacterized protein (993 aa).

The N-terminal stretch at 1 to 28 (MKLFPRSILITLVLSFALNLGIVTKIHA) is a signal peptide. 7 consecutive transmembrane segments (helical) span residues 331–351 (IVTAFLTLYVMFFGFKLLLAG), 359–379 (YINFILKMIFVTYFSIGINIT), 392–412 (MIQWAFPFLLDGINGLASWVM), 494–514 (MLVSLALSYPLLVISVAAFMV), 521–541 (MISIVILGILAPLFVPMFLFA), 554–574 (MISFLLQPMVVVTFMITMFSV), and 699–719 (IKNILLALVMACFTLYLMYNF). The interval 779–904 (GQGGGASDLE…EKVDSTSKGT (126 aa)) is disordered. The segment covering 805 to 829 (TSAPAVTTPTASSSVASSSPKTVSS) has biased composition (low complexity). Over residues 838 to 850 (PPAPTEAVSPPPA) the composition is skewed to pro residues. A compositionally biased stretch (basic and acidic residues) spans 866 to 879 (IIRDNNQESKKEID).

It belongs to the TrbL/VirB6 family.

It localises to the cell membrane. This is an uncharacterized protein from Rickettsia conorii (strain ATCC VR-613 / Malish 7).